The following is a 238-amino-acid chain: Urease subunit alpha (238 aa).

The tract at residues 1 to 102 is urease gamma; the sequence is MKLTPKELDK…LVTVHTPIEA (102 aa). The urease beta stretch occupies residues 103–238; it reads NGKLVPGELF…DDNYVKTIKE (136 aa).

It in the N-terminal section; belongs to the urease gamma subunit family. In the C-terminal section; belongs to the urease beta subunit family. Heterohexamer of 3 UreA (alpha) and 3 UreB (beta) subunits.

The protein localises to the cytoplasm. The enzyme catalyses urea + 2 H2O + H(+) = hydrogencarbonate + 2 NH4(+). It functions in the pathway nitrogen metabolism; urea degradation; CO(2) and NH(3) from urea (urease route): step 1/1. The protein is Urease subunit alpha of Helicobacter pylori (strain P12).